The primary structure comprises 415 residues: Serine hydroxymethyltransferase 1 (415 aa).

(6S)-5,6,7,8-tetrahydrofolate is bound by residues Leu-122 and 126–128 (GHL). Lys-230 bears the N6-(pyridoxal phosphate)lysine mark.

This sequence belongs to the SHMT family. In terms of assembly, homodimer. The cofactor is pyridoxal 5'-phosphate.

It is found in the cytoplasm. The enzyme catalyses (6R)-5,10-methylene-5,6,7,8-tetrahydrofolate + glycine + H2O = (6S)-5,6,7,8-tetrahydrofolate + L-serine. Its pathway is one-carbon metabolism; tetrahydrofolate interconversion. The protein operates within amino-acid biosynthesis; glycine biosynthesis; glycine from L-serine: step 1/1. Its function is as follows. Catalyzes the reversible interconversion of serine and glycine with tetrahydrofolate (THF) serving as the one-carbon carrier. This reaction serves as the major source of one-carbon groups required for the biosynthesis of purines, thymidylate, methionine, and other important biomolecules. Also exhibits THF-independent aldolase activity toward beta-hydroxyamino acids, producing glycine and aldehydes, via a retro-aldol mechanism. The protein is Serine hydroxymethyltransferase 1 of Burkholderia mallei (strain ATCC 23344).